Consider the following 139-residue polypeptide: Cytochrome c-551 (139 aa).

An N-terminal signal peptide occupies residues 1-20 (MTRTLAVVLAMTFSAAPVFA). Heme c contacts are provided by cysteine 34, cysteine 37, histidine 38, and methionine 116.

Belongs to the cytochrome c family. Binds 1 heme c group covalently per subunit.

The protein is Cytochrome c-551 of Roseobacter denitrificans (strain ATCC 33942 / OCh 114) (Erythrobacter sp. (strain OCh 114)).